Here is a 91-residue protein sequence, read N- to C-terminus: Small ribosomal subunit protein uS7 (91 aa).

Belongs to the universal ribosomal protein uS7 family. Part of the 30S ribosomal subunit. Contacts proteins S9 and S11.

One of the primary rRNA binding proteins, it binds directly to 16S rRNA where it nucleates assembly of the head domain of the 30S subunit. Is located at the subunit interface close to the decoding center, probably blocks exit of the E-site tRNA. The sequence is that of Small ribosomal subunit protein uS7 (rpsG) from Apple proliferation phytoplasma.